Consider the following 149-residue polypeptide: Protein FAM72B (149 aa).

It belongs to the FAM72 family.

The polypeptide is Protein FAM72B (FAM72B) (Homo sapiens (Human)).